The primary structure comprises 255 residues: Small ribosomal subunit protein eS1 (255 aa).

N-acetylalanine; partial is present on Ala2.

Belongs to the eukaryotic ribosomal protein eS1 family. As to quaternary structure, component of the small ribosomal subunit. Mature ribosomes consist of a small (40S) and a large (60S) subunit. The 40S subunit contains about 33 different proteins and 1 molecule of RNA (18S). The 60S subunit contains about 49 different proteins and 3 molecules of RNA (25S, 5.8S and 5S).

The protein resides in the cytoplasm. This chain is Small ribosomal subunit protein eS1 (rps1), found in Pyrenophora tritici-repentis (strain Pt-1C-BFP) (Wheat tan spot fungus).